We begin with the raw amino-acid sequence, 122 residues long: Large ribosomal subunit protein uL14 (122 aa).

This sequence belongs to the universal ribosomal protein uL14 family. In terms of assembly, part of the 50S ribosomal subunit. Forms a cluster with proteins L3 and L19. In the 70S ribosome, L14 and L19 interact and together make contacts with the 16S rRNA in bridges B5 and B8.

Functionally, binds to 23S rRNA. Forms part of two intersubunit bridges in the 70S ribosome. This is Large ribosomal subunit protein uL14 from Maridesulfovibrio salexigens (strain ATCC 14822 / DSM 2638 / NCIMB 8403 / VKM B-1763) (Desulfovibrio salexigens).